Reading from the N-terminus, the 55-residue chain is Large ribosomal subunit protein bL33 (55 aa).

The protein belongs to the bacterial ribosomal protein bL33 family.

In Bordetella pertussis (strain Tohama I / ATCC BAA-589 / NCTC 13251), this protein is Large ribosomal subunit protein bL33.